A 420-amino-acid polypeptide reads, in one-letter code: UDP-N-acetylglucosamine 1-carboxyvinyltransferase (420 aa).

22-23 (KN) serves as a coordination point for phosphoenolpyruvate. UDP-N-acetyl-alpha-D-glucosamine is bound at residue Arg-91. Residue Cys-115 is the Proton donor of the active site. Cys-115 carries the 2-(S-cysteinyl)pyruvic acid O-phosphothioketal modification. UDP-N-acetyl-alpha-D-glucosamine contacts are provided by residues 120 to 124 (RPVDL), 160 to 163 (KVSV), Asp-305, and Ile-327.

It belongs to the EPSP synthase family. MurA subfamily.

It is found in the cytoplasm. It carries out the reaction phosphoenolpyruvate + UDP-N-acetyl-alpha-D-glucosamine = UDP-N-acetyl-3-O-(1-carboxyvinyl)-alpha-D-glucosamine + phosphate. It participates in cell wall biogenesis; peptidoglycan biosynthesis. Its function is as follows. Cell wall formation. Adds enolpyruvyl to UDP-N-acetylglucosamine. The chain is UDP-N-acetylglucosamine 1-carboxyvinyltransferase from Proteus mirabilis (strain HI4320).